The primary structure comprises 278 residues: MALKNYKPVTPGQRQLVIVDRSGLHKGKPVKGLTVGLTSKGGRNNYGRITARFQGGGHKRTYRLIDFKRRKFDVSGVIERLEYDPNRTGFIALVRYDDGELSYILAPQRLAAGDRVISSAQSVDVKPGNAMPLAAMPVGTIVHNVELKPGKGGQIARSAGSYAQLVGRDQGMAILRLNSGEQRLVSGTCMATVGAVSNPDHANVSLGKAGRKRWLGKRPHNRGVTMNPVDHPHGGGEGRTSGGRHPVSPWGKPTKGRKTRSNKATDKFIMRSRHQRKS.

A disordered region spans residues 214-278 (WLGKRPHNRG…IMRSRHQRKS (65 aa)).

This sequence belongs to the universal ribosomal protein uL2 family. In terms of assembly, part of the 50S ribosomal subunit. Forms a bridge to the 30S subunit in the 70S ribosome.

In terms of biological role, one of the primary rRNA binding proteins. Required for association of the 30S and 50S subunits to form the 70S ribosome, for tRNA binding and peptide bond formation. It has been suggested to have peptidyltransferase activity; this is somewhat controversial. Makes several contacts with the 16S rRNA in the 70S ribosome. The polypeptide is Large ribosomal subunit protein uL2 (Chelativorans sp. (strain BNC1)).